We begin with the raw amino-acid sequence, 232 residues long: LexA repressor (232 aa).

The disordered stretch occupies residues methionine 1–arginine 25. Positions arginine 16–arginine 25 are enriched in basic and acidic residues. A DNA-binding region (H-T-H motif) is located at residues isoleucine 46 to arginine 66. Catalysis depends on for autocatalytic cleavage activity residues serine 156 and lysine 193.

It belongs to the peptidase S24 family. In terms of assembly, homodimer.

The enzyme catalyses Hydrolysis of Ala-|-Gly bond in repressor LexA.. Functionally, represses a number of genes involved in the response to DNA damage (SOS response), including recA and lexA. In the presence of single-stranded DNA, RecA interacts with LexA causing an autocatalytic cleavage which disrupts the DNA-binding part of LexA, leading to derepression of the SOS regulon and eventually DNA repair. The sequence is that of LexA repressor from Mycolicibacterium gilvum (strain PYR-GCK) (Mycobacterium gilvum (strain PYR-GCK)).